We begin with the raw amino-acid sequence, 421 residues long: Nuclear envelope integral membrane protein 2 (421 aa).

The signal sequence occupies residues 1–22 (MPPGSWWLVLWLPPLATLPAGA). 5 helical membrane-spanning segments follow: residues 147–167 (NVVD…FFYA), 175–195 (VFYY…FVLL), 206–226 (TFGA…CQLM), 232–252 (LWCG…LCSF), and 279–299 (LVLV…MILL).

The protein belongs to the NEMP family.

It is found in the nucleus inner membrane. The sequence is that of Nuclear envelope integral membrane protein 2 (Nemp2) from Rattus norvegicus (Rat).